The sequence spans 205 residues: N-(5'-phosphoribosyl)anthranilate isomerase (205 aa).

This sequence belongs to the TrpF family.

It catalyses the reaction N-(5-phospho-beta-D-ribosyl)anthranilate = 1-(2-carboxyphenylamino)-1-deoxy-D-ribulose 5-phosphate. Its pathway is amino-acid biosynthesis; L-tryptophan biosynthesis; L-tryptophan from chorismate: step 3/5. The sequence is that of N-(5'-phosphoribosyl)anthranilate isomerase (TRP1) from Zygosaccharomyces bailii.